The sequence spans 175 residues: Crossover junction endodeoxyribonuclease RuvC (175 aa).

Catalysis depends on residues D8, E69, and D141. The Mg(2+) site is built by D8, E69, and D141.

The protein belongs to the RuvC family. In terms of assembly, homodimer which binds Holliday junction (HJ) DNA. The HJ becomes 2-fold symmetrical on binding to RuvC with unstacked arms; it has a different conformation from HJ DNA in complex with RuvA. In the full resolvosome a probable DNA-RuvA(4)-RuvB(12)-RuvC(2) complex forms which resolves the HJ. Mg(2+) is required as a cofactor.

Its subcellular location is the cytoplasm. The enzyme catalyses Endonucleolytic cleavage at a junction such as a reciprocal single-stranded crossover between two homologous DNA duplexes (Holliday junction).. In terms of biological role, the RuvA-RuvB-RuvC complex processes Holliday junction (HJ) DNA during genetic recombination and DNA repair. Endonuclease that resolves HJ intermediates. Cleaves cruciform DNA by making single-stranded nicks across the HJ at symmetrical positions within the homologous arms, yielding a 5'-phosphate and a 3'-hydroxyl group; requires a central core of homology in the junction. The consensus cleavage sequence is 5'-(A/T)TT(C/G)-3'. Cleavage occurs on the 3'-side of the TT dinucleotide at the point of strand exchange. HJ branch migration catalyzed by RuvA-RuvB allows RuvC to scan DNA until it finds its consensus sequence, where it cleaves and resolves the cruciform DNA. The polypeptide is Crossover junction endodeoxyribonuclease RuvC (Colwellia psychrerythraea (strain 34H / ATCC BAA-681) (Vibrio psychroerythus)).